We begin with the raw amino-acid sequence, 308 residues long: tRNA dimethylallyltransferase (308 aa).

ATP is bound at residue 14–21 (GPTASGKT). A substrate-binding site is contributed by 16–21 (TASGKT). 3 interaction with substrate tRNA regions span residues 39-42 (DSAL), 163-167 (QRLSR), and 244-249 (RCVGYR).

The protein belongs to the IPP transferase family. As to quaternary structure, monomer. Mg(2+) serves as cofactor.

The enzyme catalyses adenosine(37) in tRNA + dimethylallyl diphosphate = N(6)-dimethylallyladenosine(37) in tRNA + diphosphate. Functionally, catalyzes the transfer of a dimethylallyl group onto the adenine at position 37 in tRNAs that read codons beginning with uridine, leading to the formation of N6-(dimethylallyl)adenosine (i(6)A). The chain is tRNA dimethylallyltransferase from Shewanella baltica (strain OS185).